The primary structure comprises 176 residues: Ribosome rescue factor SmrB (176 aa).

The segment at 29-51 is disordered; that stretch reads TIIQQPKKNTKQKEIKRSNREAS. The segment covering 39–51 has biased composition (basic and acidic residues); sequence KQKEIKRSNREAS. The Smr domain maps to 97-172; it reads LDMHGMTQQE…GDGALLVLLS (76 aa).

The protein belongs to the SmrB family. In terms of assembly, associates with collided ribosomes, but not with correctly translating polysomes.

Its function is as follows. Acts as a ribosome collision sensor. Detects stalled/collided disomes (pairs of ribosomes where the leading ribosome is stalled and a second ribosome has collided with it) and endonucleolytically cleaves mRNA at the 5' boundary of the stalled ribosome. Stalled/collided disomes form a new interface (primarily via the 30S subunits) that binds SmrB. Cleaved mRNA becomes available for tmRNA ligation, leading to ribosomal subunit dissociation and rescue of stalled ribosomes. The sequence is that of Ribosome rescue factor SmrB from Vibrio parahaemolyticus serotype O3:K6 (strain RIMD 2210633).